Consider the following 64-residue polypeptide: Phylloxin-S1 (64 aa).

The first 22 residues, 1 to 22 (MVFLKKSLLLVLFVGLVSLSIC), serve as a signal peptide directing secretion. Positions 23–44 (EENKREEHEEVEENAEKAEEKR) are excised as a propeptide. Residue Gln63 is modified to Glutamine amide.

In terms of tissue distribution, expressed by the skin glands.

It is found in the secreted. In terms of biological role, antimicrobial peptide against both Gram-positive and Gram-negative bacteria. The protein is Phylloxin-S1 of Phyllomedusa sauvagei (Sauvage's leaf frog).